The following is a 287-amino-acid chain: Succinate--CoA ligase [ADP-forming] subunit alpha 2 (287 aa).

CoA contacts are provided by residues Thr-17 to Gln-20, Lys-43, and Ile-96 to Glu-98. Tyr-159 serves as a coordination point for substrate. The Tele-phosphohistidine intermediate role is filled by His-246.

The protein belongs to the succinate/malate CoA ligase alpha subunit family. As to quaternary structure, heterotetramer of two alpha and two beta subunits.

The catalysed reaction is succinate + ATP + CoA = succinyl-CoA + ADP + phosphate. It carries out the reaction GTP + succinate + CoA = succinyl-CoA + GDP + phosphate. Its pathway is carbohydrate metabolism; tricarboxylic acid cycle; succinate from succinyl-CoA (ligase route): step 1/1. Functionally, succinyl-CoA synthetase functions in the citric acid cycle (TCA), coupling the hydrolysis of succinyl-CoA to the synthesis of either ATP or GTP and thus represents the only step of substrate-level phosphorylation in the TCA. The alpha subunit of the enzyme binds the substrates coenzyme A and phosphate, while succinate binding and nucleotide specificity is provided by the beta subunit. This is Succinate--CoA ligase [ADP-forming] subunit alpha 2 from Archaeoglobus fulgidus (strain ATCC 49558 / DSM 4304 / JCM 9628 / NBRC 100126 / VC-16).